The sequence spans 252 residues: Phosphate import ATP-binding protein PstB (252 aa).

In terms of domain architecture, ABC transporter spans 6-247 (ISAENLNLFY…PKDQRTEDYI (242 aa)). 38 to 45 (GPSGCGKS) provides a ligand contact to ATP.

It belongs to the ABC transporter superfamily. Phosphate importer (TC 3.A.1.7) family. The complex is composed of two ATP-binding proteins (PstB), two transmembrane proteins (PstC and PstA) and a solute-binding protein (PstS).

It localises to the cell membrane. It carries out the reaction phosphate(out) + ATP + H2O = ADP + 2 phosphate(in) + H(+). In terms of biological role, part of the ABC transporter complex PstSACB involved in phosphate import. Responsible for energy coupling to the transport system. The chain is Phosphate import ATP-binding protein PstB from Heliobacterium mobile (Heliobacillus mobilis).